Reading from the N-terminus, the 349-residue chain is Anthranilate phosphoribosyltransferase (349 aa).

5-phospho-alpha-D-ribose 1-diphosphate contacts are provided by residues Gly-82, 85 to 86, 92 to 95, 110 to 118, and Ser-122; these read GD, NVST, and KHGNRAVSG. Position 82 (Gly-82) interacts with anthranilate. Ser-94 contacts Mg(2+). Residue Asn-113 participates in anthranilate binding. An anthranilate-binding site is contributed by Arg-168. 2 residues coordinate Mg(2+): Asp-227 and Glu-228.

Belongs to the anthranilate phosphoribosyltransferase family. In terms of assembly, homodimer. Requires Mg(2+) as cofactor.

It catalyses the reaction N-(5-phospho-beta-D-ribosyl)anthranilate + diphosphate = 5-phospho-alpha-D-ribose 1-diphosphate + anthranilate. The protein operates within amino-acid biosynthesis; L-tryptophan biosynthesis; L-tryptophan from chorismate: step 2/5. Catalyzes the transfer of the phosphoribosyl group of 5-phosphorylribose-1-pyrophosphate (PRPP) to anthranilate to yield N-(5'-phosphoribosyl)-anthranilate (PRA). The protein is Anthranilate phosphoribosyltransferase of Pseudomonas fluorescens (strain ATCC BAA-477 / NRRL B-23932 / Pf-5).